Reading from the N-terminus, the 495-residue chain is MGLSRKEQVFLALLGASGVSGLTALILLLVEATSVLLPTDIKFGIVFDAGSSHTSLFLYQWLANKENGTGVVSQALACQVEGPGISSYTSNAAQAGESLQGCLEEALVLIPEAQHRKTPTFLGATAGMRLLSRKNSSQARDIFAAVTQVLGRSPVDFWGAELLAGQAEGAFGWITVNYGLGTLVKYSFTGEWIQPPEEMLVGALDMGGASTQITFVPGGPILDKSTQADFRLYGSDYSVYTHSYLCFGRDQMLSRLLVGLVQSRPAALLRHPCYLSGYQTTLALGPLYESPCVHATPPLSLPQNLTVEGTGNPGACVSAIRELFNFSSCQGQEDCAFDGVYQPPLRGQFYAFSNFYYTFHFLNLTSRQPLSTVNATIWEFCQRPWKLVEASYPGQDRWLRDYCASGLYILTLLHEGYGFSEETWPSLEFRKQAGGVDIGWTLGYMLNLTGMIPADAPAQWRAESYGVWVAKVVFMVLALVAVVGAALVQLFWLQD.

Residues 1–8 (MGLSRKEQ) lie on the Cytoplasmic side of the membrane. Residues 9–29 (VFLALLGASGVSGLTALILLL) traverse the membrane as a helical segment. Topologically, residues 30-471 (VEATSVLLPT…AESYGVWVAK (442 aa)) are extracellular. The N-linked (GlcNAc...) asparagine glycan is linked to Asn-67. A disulfide bond links Cys-78 and Cys-102. Glu-168 functions as the Proton acceptor in the catalytic mechanism. An intrachain disulfide couples Cys-246 to Cys-292. Asn-304 carries N-linked (GlcNAc...) asparagine glycosylation. A disulfide bridge links Cys-329 with Cys-335. Asn-363 carries N-linked (GlcNAc...) asparagine glycosylation. A disulfide bridge connects residues Cys-381 and Cys-403. Residues 472-492 (VVFMVLALVAVVGAALVQLFW) traverse the membrane as a helical segment. Residues 493 to 495 (LQD) lie on the Cytoplasmic side of the membrane.

It belongs to the GDA1/CD39 NTPase family. Requires Ca(2+) as cofactor. It depends on Mg(2+) as a cofactor. In terms of processing, N-glycosylated.

The protein localises to the cell membrane. It catalyses the reaction a ribonucleoside 5'-triphosphate + 2 H2O = a ribonucleoside 5'-phosphate + 2 phosphate + 2 H(+). Its activity is regulated as follows. Not inhibited by ARL 67156. Its function is as follows. Canalicular ectonucleoside NTPDase responsible for the main hepatic NTPDase activity. Ectonucleoside NTPDases catalyze the hydrolysis of gamma- and beta-phosphate residues of nucleotides, playing a central role in concentration of extracellular nucleotides. Has activity toward ATP, ADP, UTP and UDP, but not toward AMP. The chain is Ectonucleoside triphosphate diphosphohydrolase 8 (ENTPD8) from Homo sapiens (Human).